The following is a 311-amino-acid chain: Ribonuclease HIII (311 aa).

Positions 95–311 constitute an RNase H type-2 domain; the sequence is MSIVGSDEVG…NTEKAFRLLK (217 aa). Residues Asp-101, Glu-102, and Asp-206 each coordinate a divalent metal cation.

This sequence belongs to the RNase HII family. RnhC subfamily. Requires Mn(2+) as cofactor. The cofactor is Mg(2+).

The protein localises to the cytoplasm. It catalyses the reaction Endonucleolytic cleavage to 5'-phosphomonoester.. Its function is as follows. Endonuclease that specifically degrades the RNA of RNA-DNA hybrids. The protein is Ribonuclease HIII of Bacillus cereus (strain AH187).